The following is a 622-amino-acid chain: Meiotic expression up-regulated protein 25 (622 aa).

This Schizosaccharomyces pombe (strain 972 / ATCC 24843) (Fission yeast) protein is Meiotic expression up-regulated protein 25 (meu25).